The chain runs to 417 residues: MLDPNKLRNNYDFFKKKLLERNVNEQLLNQFIQTDKLMRKNLQQLELANQKQSLLAKQVAKQKDNKKLLAESKELKQKIENLNNAYKDSQNISQDLLLNFPNIAHESVPVGKNESANLELLKEGRKPVFDFKPLPHRELCEKLNLVAFDKATKISGTRFVAYTDKAAKLLRAITNLMIDLNKSKYQEWNLPVVINELSLRSTGQLPKFKDDVFKLENTRYYLSPTLEVQLINLHANEIFNEEDLPKYYTATGINFRQEAGSAGKQTKGTIRLHQFQKTELVKFCKPENAINELEAMVRDAEQILKALKLPFRRLLLCTGDMGFSAEKTYDLEVWMAASNEYREVSSCSSCGDFQARRAMIRYKDINNGKNSYVATLNGTALSIDRIFAAILENFQTKDGKILIPQALKKYLDFDTIK.

T225 to E227 is a binding site for L-serine. Residue R256–E258 participates in ATP binding. E279 provides a ligand contact to L-serine. E343 to S346 contributes to the ATP binding site. T379 contacts L-serine.

The protein belongs to the class-II aminoacyl-tRNA synthetase family. Type-1 seryl-tRNA synthetase subfamily. Homodimer. The tRNA molecule binds across the dimer.

It is found in the cytoplasm. The enzyme catalyses tRNA(Ser) + L-serine + ATP = L-seryl-tRNA(Ser) + AMP + diphosphate + H(+). It carries out the reaction tRNA(Sec) + L-serine + ATP = L-seryl-tRNA(Sec) + AMP + diphosphate + H(+). It participates in aminoacyl-tRNA biosynthesis; selenocysteinyl-tRNA(Sec) biosynthesis; L-seryl-tRNA(Sec) from L-serine and tRNA(Sec): step 1/1. Its function is as follows. Catalyzes the attachment of serine to tRNA(Ser). Is also able to aminoacylate tRNA(Sec) with serine, to form the misacylated tRNA L-seryl-tRNA(Sec), which will be further converted into selenocysteinyl-tRNA(Sec). This Mycoplasma genitalium (strain ATCC 33530 / DSM 19775 / NCTC 10195 / G37) (Mycoplasmoides genitalium) protein is Serine--tRNA ligase.